A 204-amino-acid chain; its full sequence is Ribosome maturation factor RimM (204 aa).

The PRC barrel domain occupies 117–192; the sequence is DEDEFFSADL…EVTIDPPDDL (76 aa).

It belongs to the RimM family. In terms of assembly, binds ribosomal protein uS19.

The protein resides in the cytoplasm. In terms of biological role, an accessory protein needed during the final step in the assembly of 30S ribosomal subunit, possibly for assembly of the head region. Essential for efficient processing of 16S rRNA. May be needed both before and after RbfA during the maturation of 16S rRNA. It has affinity for free ribosomal 30S subunits but not for 70S ribosomes. This Methylobacterium nodulans (strain LMG 21967 / CNCM I-2342 / ORS 2060) protein is Ribosome maturation factor RimM.